Reading from the N-terminus, the 776-residue chain is Lon protease (776 aa).

Positions Leu12–Ile209 constitute a Lon N-terminal domain. Position 360 to 367 (Gly360 to Thr367) interacts with ATP. The region spanning Glu596–Ile776 is the Lon proteolytic domain. Active-site residues include Ser683 and Lys726.

Belongs to the peptidase S16 family. As to quaternary structure, homohexamer. Organized in a ring with a central cavity.

It localises to the cytoplasm. It carries out the reaction Hydrolysis of proteins in presence of ATP.. Functionally, ATP-dependent serine protease that mediates the selective degradation of mutant and abnormal proteins as well as certain short-lived regulatory proteins. Required for cellular homeostasis and for survival from DNA damage and developmental changes induced by stress. Degrades polypeptides processively to yield small peptide fragments that are 5 to 10 amino acids long. Binds to DNA in a double-stranded, site-specific manner. This chain is Lon protease, found in Finegoldia magna (strain ATCC 29328 / DSM 20472 / WAL 2508) (Peptostreptococcus magnus).